A 318-amino-acid chain; its full sequence is NADH-ubiquinone oxidoreductase chain 1 (318 aa).

A run of 8 helical transmembrane segments spans residues Phe-2–Leu-22, Ile-68–Pro-88, Leu-100–Gly-120, Leu-146–Ile-166, His-171–Ala-191, Leu-222–Phe-242, Glu-253–Val-273, and Leu-294–Ile-314.

Belongs to the complex I subunit 1 family.

The protein resides in the mitochondrion inner membrane. The enzyme catalyses a ubiquinone + NADH + 5 H(+)(in) = a ubiquinol + NAD(+) + 4 H(+)(out). Core subunit of the mitochondrial membrane respiratory chain NADH dehydrogenase (Complex I) that is believed to belong to the minimal assembly required for catalysis. Complex I functions in the transfer of electrons from NADH to the respiratory chain. The immediate electron acceptor for the enzyme is believed to be ubiquinone. In Coelops frithii (East Asian tailless leaf-nosed bat), this protein is NADH-ubiquinone oxidoreductase chain 1 (MT-ND1).